The following is a 1028-amino-acid chain: Serine/threonine-protein kinase fray2 (1028 aa).

Positions 1–67 are disordered; that stretch reads MSDDKYHHDK…PKPRKNYPNS (67 aa). Residues 20–54 show a composition bias toward low complexity; it reads KQSTAAALSSSSTLASSSSMTTTTTTTSTTTTAAS. Residues 71 to 330 enclose the Protein kinase domain; sequence YELKETIGKG…PSKLLEHRFF (260 aa). Residues 77–85 and lysine 100 contribute to the ATP site; that span reads IGKGGSGLV. The active-site Proton acceptor is the aspartate 195. Threonine 230 is subject to Phosphothreonine; by autocatalysis. Positions 368-381 are enriched in polar residues; it reads TSSPQFDTGHSNSA. 3 disordered regions span residues 368-467, 486-561, and 580-914; these read TSSP…STVV, AYHQ…LQQP, and DLIT…IQSK. 2 stretches are compositionally biased toward low complexity: residues 387 to 419 and 432 to 458; these read PNENNDNNNSSTTTTTTTTTTTNPSNNNNNNNN and TPSHTPSTSPGSTPSHSRTSTPTSNHT. Polar residues-rich tracts occupy residues 503-518 and 528-542; these read IPNHNASSNLGASAHS and IHPTSSAASTTVVNN. A compositionally biased stretch (low complexity) spans 543 to 561; it reads TQQPQTLQPPQQQHQLQQP. Polar residues predominate over residues 595-616; that stretch reads IPSSSSHGNIPSLVTTSPKSPL. Low complexity-rich tracts occupy residues 617–642 and 683–700; these read QHQQQIPQQQQDPAMINSNNSSISSN and SSRASSLSESSDSTSHTS. Composition is skewed to basic and acidic residues over residues 701–714, 728–742, 753–855, and 865–893; these read SSDEHSSRYESDRK, SKRDRERERDRDRSN, VSRD…DRSR, and SRDSRNKSRDRSSDSDRSRDRSRDRDYKS.

Belongs to the protein kinase superfamily. STE Ser/Thr protein kinase family. STE20 subfamily. It depends on Mn(2+) as a cofactor. Post-translationally, undergoes autophosphorylation in the catalytic domain.

It carries out the reaction L-seryl-[protein] + ATP = O-phospho-L-seryl-[protein] + ADP + H(+). The catalysed reaction is L-threonyl-[protein] + ATP = O-phospho-L-threonyl-[protein] + ADP + H(+). The sequence is that of Serine/threonine-protein kinase fray2 from Dictyostelium discoideum (Social amoeba).